A 340-amino-acid polypeptide reads, in one-letter code: Ketol-acid reductoisomerase (NADP(+)) (340 aa).

In terms of domain architecture, KARI N-terminal Rossmann spans 1 to 182; the sequence is MRVYYDRDCD…GGGRSGIIET (182 aa). Residues 24 to 27, Arg48, Ser51, Ser53, and 83 to 86 contribute to the NADP(+) site; these read YGSQ and DELQ. His108 is a catalytic residue. Residue Gly134 participates in NADP(+) binding. In terms of domain architecture, KARI C-terminal knotted spans 183–329; that stretch reads NFREECETDL…ETLRGMMPWI (147 aa). Residues Asp191, Glu195, Glu227, and Glu231 each coordinate Mg(2+). Ser252 is a binding site for substrate.

This sequence belongs to the ketol-acid reductoisomerase family. The cofactor is Mg(2+).

The catalysed reaction is (2R)-2,3-dihydroxy-3-methylbutanoate + NADP(+) = (2S)-2-acetolactate + NADPH + H(+). It catalyses the reaction (2R,3R)-2,3-dihydroxy-3-methylpentanoate + NADP(+) = (S)-2-ethyl-2-hydroxy-3-oxobutanoate + NADPH + H(+). The protein operates within amino-acid biosynthesis; L-isoleucine biosynthesis; L-isoleucine from 2-oxobutanoate: step 2/4. It participates in amino-acid biosynthesis; L-valine biosynthesis; L-valine from pyruvate: step 2/4. Its function is as follows. Involved in the biosynthesis of branched-chain amino acids (BCAA). Catalyzes an alkyl-migration followed by a ketol-acid reduction of (S)-2-acetolactate (S2AL) to yield (R)-2,3-dihydroxy-isovalerate. In the isomerase reaction, S2AL is rearranged via a Mg-dependent methyl migration to produce 3-hydroxy-3-methyl-2-ketobutyrate (HMKB). In the reductase reaction, this 2-ketoacid undergoes a metal-dependent reduction by NADPH to yield (R)-2,3-dihydroxy-isovalerate. This Jannaschia sp. (strain CCS1) protein is Ketol-acid reductoisomerase (NADP(+)).